The sequence spans 280 residues: Dimethylglycine N-methyltransferase (280 aa).

The protein belongs to the methyltransferase superfamily. As to quaternary structure, monomer.

It catalyses the reaction N,N-dimethylglycine + S-adenosyl-L-methionine = glycine betaine + S-adenosyl-L-homocysteine + H(+). Its pathway is amine and polyamine biosynthesis; betaine biosynthesis via glycine pathway; betaine from glycine: step 3/3. In terms of biological role, catalyzes the methylation of dimethylglycine to betaine with S-adenosylmethionine (AdoMet) acting as the methyl donor. It has strict specificity for dimethylglycine as the methyl group acceptors. In Parasynechococcus marenigrum (strain WH8102), this protein is Dimethylglycine N-methyltransferase.